A 61-amino-acid polypeptide reads, in one-letter code: Phosphoenolpyruvate synthase (61 aa).

This sequence belongs to the PEP-utilizing enzyme family. The cofactor is Mg(2+).

The enzyme catalyses pyruvate + ATP + H2O = phosphoenolpyruvate + AMP + phosphate + 2 H(+). It functions in the pathway carbohydrate biosynthesis; gluconeogenesis. In terms of biological role, catalyzes the phosphorylation of pyruvate to phosphoenolpyruvate. The polypeptide is Phosphoenolpyruvate synthase (ppsA) (Enterobacter agglomerans (Erwinia herbicola)).